The sequence spans 131 residues: Squamosa promoter-binding-like protein 3 (131 aa).

Basic and acidic residues predominate over residues methionine 1–leucine 17. A disordered region spans residues methionine 1–cysteine 54. Positions serine 18–alanine 38 are enriched in acidic residues. The interval glycine 45–threonine 129 is sufficient and necessary for DNA binding. The SBP-type zinc finger occupies serine 51–serine 128. Residues cysteine 54, cysteine 59, cysteine 76, histidine 79, cysteine 95, cysteine 98, histidine 102, and cysteine 114 each contribute to the Zn(2+) site. The short motif at lysine 111–lysine 127 is the Bipartite nuclear localization signal element.

It depends on Zn(2+) as a cofactor. In terms of tissue distribution, expressed in vegetative and inflorescence apical meristems, floral meristems, leaf and flower organ primordia, inflorescence stem tissue and to lower extent in roots.

It is found in the nucleus. Its subcellular location is the cytoplasm. Functionally, trans-acting factor that binds specifically to the consensus nucleotide sequence 5'-TNCGTACAA-3' of AP1 promoter. Binds specifically to the 5'-GTAC-3' core sequence. Promotes both vegetative phase change and flowering. Regulates phase-specific patterns of leaf epidermal differentiation and flowering time, but does not seem to affect leaf shape. The chain is Squamosa promoter-binding-like protein 3 (SPL3) from Arabidopsis thaliana (Mouse-ear cress).